Consider the following 113-residue polypeptide: Cell cycle protein GpsB (113 aa).

Residues 32–71 (LDNVIKDYESFTKDNQQLSDENERLRAKVDELTKQVAVGA) adopt a coiled-coil conformation.

It belongs to the GpsB family. In terms of assembly, forms polymers through the coiled coil domains. Interacts with PBP1, MreC and EzrA.

It localises to the cytoplasm. Functionally, divisome component that associates with the complex late in its assembly, after the Z-ring is formed, and is dependent on DivIC and PBP2B for its recruitment to the divisome. Together with EzrA, is a key component of the system that regulates PBP1 localization during cell cycle progression. Its main role could be the removal of PBP1 from the cell pole after pole maturation is completed. Also contributes to the recruitment of PBP1 to the division complex. Not essential for septum formation. The polypeptide is Cell cycle protein GpsB (Lactiplantibacillus plantarum (strain ATCC BAA-793 / NCIMB 8826 / WCFS1) (Lactobacillus plantarum)).